The chain runs to 272 residues: Nitrogenase iron protein (272 aa).

Position 8 to 15 (8 to 15 (GKGGIGKS)) interacts with ATP. Position 94 (Cys-94) interacts with [4Fe-4S] cluster. Arg-97 carries the post-translational modification ADP-ribosylarginine; by dinitrogenase reductase ADP-ribosyltransferase. [4Fe-4S] cluster is bound at residue Cys-129.

The protein belongs to the NifH/BchL/ChlL family. Homodimer. Requires [4Fe-4S] cluster as cofactor. The reversible ADP-ribosylation of Arg-97 inactivates the nitrogenase reductase and regulates nitrogenase activity.

The catalysed reaction is N2 + 8 reduced [2Fe-2S]-[ferredoxin] + 16 ATP + 16 H2O = H2 + 8 oxidized [2Fe-2S]-[ferredoxin] + 2 NH4(+) + 16 ADP + 16 phosphate + 6 H(+). Its function is as follows. The key enzymatic reactions in nitrogen fixation are catalyzed by the nitrogenase complex, which has 2 components: the iron protein and the molybdenum-iron protein. This Alkaliphilus metalliredigens (strain QYMF) protein is Nitrogenase iron protein.